We begin with the raw amino-acid sequence, 59 residues long: Dendroaspin (59 aa).

4 disulfide bridges follow: Cys-3-Cys-22, Cys-17-Cys-37, Cys-39-Cys-51, and Cys-52-Cys-57. A Cell attachment site motif is present at residues 43 to 45 (RGD).

This sequence belongs to the three-finger toxin family. Short-chain subfamily. Antiplatelet toxin sub-subfamily. In terms of tissue distribution, expressed by the venom gland.

It localises to the secreted. Functionally, inhibits ADP-induced platelet aggregation and inhibits the binding of purified platelet fibrinogen receptor alpha-IIb/beta-3 (ITGA2B/ITGB3) to immobilized fibrinogen. Has also been described to inhibit cell adhesion to fibrinogen, fibronectin, laminin and collagen. The polypeptide is Dendroaspin (Dendroaspis jamesoni kaimosae (Eastern Jameson's mamba)).